A 418-amino-acid polypeptide reads, in one-letter code: MNDLEKICADAYEARVKIGTLDTDIKNKVLNDAADNLLKAEKEILEANKRDVATAEENMKAKSMIDRLSLDHDRLLGMADGLRQIAKLADPIGEVMSMAKRPNGLIIGKRRVAIGVVGIIFEARPNVTSDAFGLCFKTGNCVILKGGSDAINTNIAIVKALKKALTDNLVSDAALALIESTDRETTNAFMKMDQYVDVLIPRGGAGLIQNVVKNATIPVIQTGTGNCHVYVDKDADFDMAVNIINNAKTQRISVCNACESIVVHSAIAEEFLPKLYDKLREHHVQLHCDERAQAILAGRDDVTEATADDWGMEYLDYIMSVKIVDSIDEAIEHINRYNTSHSEAIVTNDYDNAQKFLNEIDAACVYVNASTRFSDGNEFGFGAEIGISTQKLHARGPMGLEALTSYKYIIYGSGQIRE.

It belongs to the gamma-glutamyl phosphate reductase family.

The protein localises to the cytoplasm. It carries out the reaction L-glutamate 5-semialdehyde + phosphate + NADP(+) = L-glutamyl 5-phosphate + NADPH + H(+). It participates in amino-acid biosynthesis; L-proline biosynthesis; L-glutamate 5-semialdehyde from L-glutamate: step 2/2. Its function is as follows. Catalyzes the NADPH-dependent reduction of L-glutamate 5-phosphate into L-glutamate 5-semialdehyde and phosphate. The product spontaneously undergoes cyclization to form 1-pyrroline-5-carboxylate. The polypeptide is Gamma-glutamyl phosphate reductase (Agathobacter rectalis (strain ATCC 33656 / DSM 3377 / JCM 17463 / KCTC 5835 / VPI 0990) (Eubacterium rectale)).